A 231-amino-acid chain; its full sequence is Large ribosomal subunit protein uL1 (231 aa).

It belongs to the universal ribosomal protein uL1 family. As to quaternary structure, part of the 50S ribosomal subunit.

In terms of biological role, binds directly to 23S rRNA. The L1 stalk is quite mobile in the ribosome, and is involved in E site tRNA release. Protein L1 is also a translational repressor protein, it controls the translation of the L11 operon by binding to its mRNA. This is Large ribosomal subunit protein uL1 from Ectopseudomonas mendocina (strain ymp) (Pseudomonas mendocina).